Consider the following 255-residue polypeptide: Membrane protein insertase YidC 2 (255 aa).

The N-terminal stretch at 1-20 (MKKKLGLLAMVVALMAITAG) is a signal peptide. C21 carries N-palmitoyl cysteine lipidation. C21 is lipidated: S-diacylglycerol cysteine. 5 consecutive transmembrane segments (helical) span residues 59-79 (YGLA…PLMI), 129-149 (LAGC…YHAI), 160-180 (FLWF…VAAI), 202-222 (MMLW…PAAL), and 223-243 (SLYW…IKGP).

This sequence belongs to the OXA1/ALB3/YidC family. Type 2 subfamily.

It is found in the cell membrane. Functionally, required for the insertion and/or proper folding and/or complex formation of integral membrane proteins into the membrane. Involved in integration of membrane proteins that insert both dependently and independently of the Sec translocase complex, as well as at least some lipoproteins. The sequence is that of Membrane protein insertase YidC 2 from Bacillus anthracis.